A 194-amino-acid polypeptide reads, in one-letter code: Ribosome maturation factor RimM (194 aa).

Residues 113–194 (DGEYYWIDLI…RIVADWGLDY (82 aa)) form the PRC barrel domain.

It belongs to the RimM family. Binds ribosomal protein uS19.

The protein resides in the cytoplasm. An accessory protein needed during the final step in the assembly of 30S ribosomal subunit, possibly for assembly of the head region. Essential for efficient processing of 16S rRNA. May be needed both before and after RbfA during the maturation of 16S rRNA. It has affinity for free ribosomal 30S subunits but not for 70S ribosomes. This is Ribosome maturation factor RimM from Leptothrix cholodnii (strain ATCC 51168 / LMG 8142 / SP-6) (Leptothrix discophora (strain SP-6)).